The following is a 109-amino-acid chain: Iron-sulfur cluster assembly protein CyaY (109 aa).

This sequence belongs to the frataxin family.

Functionally, involved in iron-sulfur (Fe-S) cluster assembly. May act as a regulator of Fe-S biogenesis. This chain is Iron-sulfur cluster assembly protein CyaY, found in Shewanella baltica (strain OS155 / ATCC BAA-1091).